We begin with the raw amino-acid sequence, 529 residues long: E3 ubiquitin-protein ligase arih1 (529 aa).

Disordered regions lie at residues 1-29 and 46-69; these read MDSD…HEDE and ERAG…EEDE. The segment covering 51–64 has biased composition (gly residues); it reads CGEGGGSALGPGPG. Positions 77-125 are UBA-like; that stretch reads TAEQILQHMVECIREVNEVIQNPATITRILLSHFNWDKEKLMERYFDGN. The tract at residues 154–365 is TRIAD supradomain; that stretch reads LDMPCQICYL…SAWYNCNRYN (212 aa). Zn(2+) is bound by residues cysteine 158, cysteine 161, cysteine 175, histidine 177, cysteine 180, cysteine 183, cysteine 203, cysteine 208, cysteine 248, cysteine 253, cysteine 269, cysteine 271, cysteine 276, cysteine 279, histidine 284, cysteine 289, cysteine 316, and cysteine 319. The segment at 158–208 adopts an RING-type 1 zinc-finger fold; the sequence is CQICYLNYPNSYFTGLECGHKFCMQCWGEYLTTKIIEEGMGQTISCPAHGC. Residues 228 to 289 form an IBR-type zinc finger; that stretch reads LKYQHLITNS…GENWHDPVKC (62 aa). Residues 316–347 form an RING-type 2; atypical zinc finger; that stretch reads CPKCHVTIEKDGGCNHMVCRNQNCKAEFCWVC. The active site involves cysteine 329. Zn(2+) contacts are provided by cysteine 334, cysteine 339, cysteine 344, cysteine 347, histidine 354, and cysteine 361. The interval 380 to 529 is ariadne domain; the sequence is RAALQRYLFY…EKDLWEYIED (150 aa).

Belongs to the RBR family. Ariadne subfamily. As to quaternary structure, interacts (via the first RING-type zinc finger) with ube2l3. Associates with cullin-RING ubiquitin ligase (CRL) complexes containing neddylated cullin.

It localises to the cytoplasm. It is found in the nucleus. The catalysed reaction is [E2 ubiquitin-conjugating enzyme]-S-ubiquitinyl-L-cysteine + [acceptor protein]-L-lysine = [E2 ubiquitin-conjugating enzyme]-L-cysteine + [acceptor protein]-N(6)-ubiquitinyl-L-lysine.. It functions in the pathway protein modification; protein ubiquitination. With respect to regulation, autoinhibited by the ariadne domain, which masks the second RING-type zinc finger that contains the active site and inhibits the E3 activity. Inhibition is relieved upon binding to neddylated cullin-RING ubiquitin ligase complexes, which activate the E3 ligase activity of ARIH1. E3 ubiquitin-protein ligase, which catalyzes ubiquitination of target proteins together with ubiquitin-conjugating enzyme E2 ube2l3. Acts as an atypical E3 ubiquitin-protein ligase by working together with cullin-RING ubiquitin ligase (CRL) complexes and initiating ubiquitination of CRL substrates: associates with CRL complexes and specifically mediates addition of the first ubiquitin on CRLs targets. The initial ubiquitin is then elongated. E3 ubiquitin-protein ligase activity is activated upon binding to neddylated cullin-RING ubiquitin ligase complexes. This Xenopus laevis (African clawed frog) protein is E3 ubiquitin-protein ligase arih1 (arih1).